The sequence spans 259 residues: Phosphatidylglycerol--prolipoprotein diacylglyceryl transferase (259 aa).

4 helical membrane-spanning segments follow: residues 16–36, 55–75, 92–112, and 117–137; these read FAIS…WFYA, FITY…VLLY, QGGM…YLFC, and VNFL…LFLG. Residue R138 participates in a 1,2-diacyl-sn-glycero-3-phospho-(1'-sn-glycerol) binding. Helical transmembrane passes span 172 to 192, 201 to 221, and 228 to 248; these read QLYE…YATF, ALNL…IEIF, and IGFI…MLIL.

Belongs to the Lgt family.

Its subcellular location is the cell inner membrane. The catalysed reaction is L-cysteinyl-[prolipoprotein] + a 1,2-diacyl-sn-glycero-3-phospho-(1'-sn-glycerol) = an S-1,2-diacyl-sn-glyceryl-L-cysteinyl-[prolipoprotein] + sn-glycerol 1-phosphate + H(+). Its pathway is protein modification; lipoprotein biosynthesis (diacylglyceryl transfer). Functionally, catalyzes the transfer of the diacylglyceryl group from phosphatidylglycerol to the sulfhydryl group of the N-terminal cysteine of a prolipoprotein, the first step in the formation of mature lipoproteins. The polypeptide is Phosphatidylglycerol--prolipoprotein diacylglyceryl transferase (Rickettsia canadensis (strain McKiel)).